We begin with the raw amino-acid sequence, 556 residues long: 2-succinyl-5-enolpyruvyl-6-hydroxy-3-cyclohexene-1-carboxylate synthase (556 aa).

It belongs to the TPP enzyme family. MenD subfamily. In terms of assembly, homodimer. Mg(2+) serves as cofactor. Requires Mn(2+) as cofactor. Thiamine diphosphate is required as a cofactor.

The enzyme catalyses isochorismate + 2-oxoglutarate + H(+) = 5-enolpyruvoyl-6-hydroxy-2-succinyl-cyclohex-3-ene-1-carboxylate + CO2. It functions in the pathway quinol/quinone metabolism; 1,4-dihydroxy-2-naphthoate biosynthesis; 1,4-dihydroxy-2-naphthoate from chorismate: step 2/7. It participates in quinol/quinone metabolism; menaquinone biosynthesis. In terms of biological role, catalyzes the thiamine diphosphate-dependent decarboxylation of 2-oxoglutarate and the subsequent addition of the resulting succinic semialdehyde-thiamine pyrophosphate anion to isochorismate to yield 2-succinyl-5-enolpyruvyl-6-hydroxy-3-cyclohexene-1-carboxylate (SEPHCHC). This chain is 2-succinyl-5-enolpyruvyl-6-hydroxy-3-cyclohexene-1-carboxylate synthase, found in Escherichia coli (strain 55989 / EAEC).